We begin with the raw amino-acid sequence, 160 residues long: Putative UPF0479 protein YLR466C-A (160 aa).

A run of 2 helical transmembrane segments spans residues 39–59 and 136–156; these read IVFCLPFFPALFLVPVQKVLQ and VPMIWLDVFQVFFVFLVISQH.

The protein belongs to the UPF0479 family.

It is found in the membrane. The chain is Putative UPF0479 protein YLR466C-A from Saccharomyces cerevisiae (strain ATCC 204508 / S288c) (Baker's yeast).